A 343-amino-acid chain; its full sequence is Alpha-tocopherol transfer protein-like (343 aa).

Residues 1–29 (MSEESDSLRTSPSVASLSENELPLPPPDP) are disordered. Polar residues predominate over residues 8 to 19 (LRTSPSVASLSE). One can recognise a CRAL-TRIO domain in the interval 118–283 (RPSALKDVLN…EYGGTAGELD (166 aa)).

May act as a protein that binds a hydrophobic ligand. The sequence is that of Alpha-tocopherol transfer protein-like (Ttpal) from Mus musculus (Mouse).